We begin with the raw amino-acid sequence, 367 residues long: MNIKSLLLGSAAALVAASGAQAADAIVAPEPEAVEYVRVCDAYGAGYFYIPGTETCLRVHGYVRYDVKGGDDVYSGTDRNGWDKGARFALMFNTNSETELGTLGTYTQLRFNYTSNNSRHDGQYGDFSDDRDVADGGVSTGTDLQFAYITLGGFKVGIDESEFHTFTGYLGDVINDDVVAAGSYRTGKIAYTFTGGNGFSAVIALEQGGEDVDNDYTIDGYMPHVVGGLKYAGGWGSIAGVVAYDSVIEEWATKVRGDVNITDRFSVWLQGAYSSAATPNQNYGQWGGDWAVWGGAKFIAPEKATFNLQAAHDDWGKTAVTANVAYQLVPGFTITPEVSYTKFGGEWKDTVAEDNAWGGIVRFQRSF.

The N-terminal stretch at 1 to 22 (MNIKSLLLGSAAALVAASGAQA) is a signal peptide.

The protein belongs to the alphaproteobacteria porin family. Monomer.

It is found in the cell outer membrane. Forms passive diffusion pores that allow small molecular weight hydrophilic materials across the outer membrane. This chain is Porin Omp2a (omp2a), found in Brucella melitensis biotype 1 (strain ATCC 23456 / CCUG 17765 / NCTC 10094 / 16M).